Reading from the N-terminus, the 70-residue chain is U2-agatoxin-Ao1p (70 aa).

The N-terminal stretch at 1–20 (MRAIISLILISAMVFSMIAA) is a signal peptide. Positions 21-34 (VPXXEGLQLSEDER) are excised as a propeptide. Disulfide bonds link C37–C53, C44–C58, and C52–C68. The residue at position 69 (L69) is a Leucine amide.

This sequence belongs to the neurotoxin 01 (U2-agtx) family. Expressed by the venom gland.

The protein resides in the secreted. Its function is as follows. Insect active toxin causing rapid but reversible paralysis in crickets. No activity shown in mammals. Does not show effect on mammalian voltage-gated calcium channels. This Agelena orientalis (Funnel-web spider) protein is U2-agatoxin-Ao1p.